A 212-amino-acid polypeptide reads, in one-letter code: Stromal cell-derived factor 2-like protein (212 aa).

A signal peptide spans 1–19 (MKSLFLILILCITIPLIFA). An N-linked (GlcNAc...) asparagine glycan is attached at N20. MIR domains are found at residues 29 to 86 (ITKV…IKGP), 94 to 149 (GTVV…VETE), and 151 to 206 (GKEW…TEEG).

The protein resides in the secreted. This is Stromal cell-derived factor 2-like protein from Dictyostelium discoideum (Social amoeba).